The sequence spans 142 residues: Galactose-6-phosphate isomerase subunit LacA (142 aa).

Belongs to the LacAB/RpiB family. In terms of assembly, heteromultimeric protein consisting of LacA and LacB.

It catalyses the reaction aldehydo-D-galactose 6-phosphate = keto-D-tagatose 6-phosphate. It functions in the pathway carbohydrate metabolism; D-galactose 6-phosphate degradation; D-tagatose 6-phosphate from D-galactose 6-phosphate: step 1/1. The sequence is that of Galactose-6-phosphate isomerase subunit LacA from Staphylococcus aureus (strain JH9).